The primary structure comprises 426 residues: MVLSVPVIALGATLGTATSILALCGVTCLCRHMHPKKGLLPRDREPDPEKARPGVLQAAQQFNIKKSTEPVQPRPLLKFPDIYGPRPAVTAPEVINYADYTLETTEESAAPASPQAQSDSRLKRQVTEELSIRPQNGVVEDVCVMETWNPEKAASWNQAPKLHFRLDYDQKKAELFVTSLEAVTSDHEGGCDCYIQGSVAVKTGSVEAQTALKKRQLHTTWEEGLALPLGEEELPTATLTLTLRTCDRFSRHSVIGELRLGLDGASVPLGAAQWGELKTTAKEPSAGAGEVLLSISYLPAANRLLVVLIKAKNLHSNQSKELLGKDVSVKVTLKHQAQKLKKKQTKRAKHKINPVWNEMIMFELPDDLLRASSVELEVLGQGEEGPSCELGHCSLGLHASGSERSHWEEMLKNPRRQIAMWHQLHL.

Residues M1–P6 are Vesicular-facing. A helical transmembrane segment spans residues V7 to L29. The Cytoplasmic segment spans residues C30–L426. 2 C2 domains span residues Q158 to G275 and G287 to H422.

The protein belongs to the synaptotagmin family. Interacts with NRXN1. Expressed in brain, heart, spleen, lung and testis.

It localises to the cytoplasmic vesicle membrane. Functionally, may be involved in transport vesicle docking to the plasma membrane. The chain is Synaptotagmin-13 (Syt13) from Mus musculus (Mouse).